The primary structure comprises 373 residues: S-adenosylmethionine:tRNA ribosyltransferase-isomerase (373 aa).

Belongs to the QueA family. In terms of assembly, monomer.

It localises to the cytoplasm. The enzyme catalyses 7-aminomethyl-7-carbaguanosine(34) in tRNA + S-adenosyl-L-methionine = epoxyqueuosine(34) in tRNA + adenine + L-methionine + 2 H(+). It functions in the pathway tRNA modification; tRNA-queuosine biosynthesis. Functionally, transfers and isomerizes the ribose moiety from AdoMet to the 7-aminomethyl group of 7-deazaguanine (preQ1-tRNA) to give epoxyqueuosine (oQ-tRNA). In Prochlorococcus marinus (strain MIT 9515), this protein is S-adenosylmethionine:tRNA ribosyltransferase-isomerase.